Here is a 100-residue protein sequence, read N- to C-terminus: Small ribosomal subunit protein uS14c (100 aa).

This sequence belongs to the universal ribosomal protein uS14 family. As to quaternary structure, part of the 30S ribosomal subunit.

The protein localises to the plastid. It is found in the chloroplast. Binds 16S rRNA, required for the assembly of 30S particles. This chain is Small ribosomal subunit protein uS14c, found in Aethionema grandiflorum (Persian stone-cress).